Consider the following 141-residue polypeptide: Hemoglobin subunit alpha-1 (141 aa).

Residues 1–141 form the Globin domain; that stretch reads VLSEGNKKAI…VTYQLSSLYR (141 aa). His-59 lines the O2 pocket. Position 88 (His-88) interacts with heme b.

It belongs to the globin family. In terms of assembly, heterotetramer of two alpha chains and two beta chains. As to expression, red blood cells.

Involved in oxygen transport from the lung to the various peripheral tissues. The protein is Hemoglobin subunit alpha-1 of Torpedo marmorata (Marbled electric ray).